A 617-amino-acid chain; its full sequence is Acyl-CoA dehydrogenase family member 11 (617 aa).

The interval 1-47 (MHRIGNAVRMASSSSANATITARHTQYSHAKTGGFSQTGPTLHNPYK) is disordered. A compositionally biased stretch (low complexity) spans 11-22 (ASSSSANATITA). Over residues 23–41 (RHTQYSHAKTGGFSQTGPT) the composition is skewed to polar residues. Residues 206–215 (QWMTEKKGGS) and 241–243 (FSS) contribute to the FAD site. Substrate is bound at residue serine 215. The substrate site is built by serine 267 and arginine 334. Residues arginine 359, 366 to 369 (QSKW), glutamate 437, glycine 441, and 464 to 466 (EGT) each bind FAD.

This sequence belongs to the acyl-CoA dehydrogenase family. In terms of assembly, homotetramer; dimer of dimers.

Its function is as follows. Promotes adaption to elevated temperatures by regulating expression of the lipid desaturase, fat-7. Binds selectively and with high affinity to fatty acids with chain lengths from C10 to C12 and prevents them from activating fat-7 expression mediated by the nuclear hormone receptor nhr-49, leading to low levels of membrane lipid desaturation and membrane fluidity for adaption to heat. The polypeptide is Acyl-CoA dehydrogenase family member 11 (Caenorhabditis elegans).